A 119-amino-acid polypeptide reads, in one-letter code: Large ribosomal subunit protein bL20 (119 aa).

Belongs to the bacterial ribosomal protein bL20 family.

In terms of biological role, binds directly to 23S ribosomal RNA and is necessary for the in vitro assembly process of the 50S ribosomal subunit. It is not involved in the protein synthesizing functions of that subunit. The chain is Large ribosomal subunit protein bL20 from Caldicellulosiruptor bescii (strain ATCC BAA-1888 / DSM 6725 / KCTC 15123 / Z-1320) (Anaerocellum thermophilum).